The primary structure comprises 403 residues: Guanine nucleotide-binding protein alpha-8 subunit (403 aa).

Glycine 2 is lipidated: N-myristoyl glycine. A lipid anchor (S-palmitoyl cysteine) is attached at cysteine 3. The 326-residue stretch at 31–356 (LDFRILLLGA…KVLMKATKDL (326 aa)) folds into the G-alpha domain. A G1 motif region spans residues 34 to 47 (RILLLGAGESGKST). GTP is bound by residues 39 to 46 (GAGESGKS), 174 to 180 (IMTRVRT), 199 to 203 (DVGGQ), 268 to 271 (NKKD), and alanine 324. Residues serine 46 and threonine 180 each contribute to the Mg(2+) site. The segment at 172–180 (DCIMTRVRT) is G2 motif. Positions 195–204 (FRVVDVGGQR) are G3 motif. The G4 motif stretch occupies residues 264 to 271 (FLVLNKKD). Positions 322-327 (IAARYK) are G5 motif. A disordered region spans residues 353 to 403 (TKDLKKSSKQSSKSSLGNSTQNNSNNNNNNNNSNNNNGQTTIDGATAKINS). Positions 374 to 389 (NNSNNNNNNNNSNNNN) are enriched in low complexity. The span at 390 to 403 (GQTTIDGATAKINS) shows a compositional bias: polar residues.

This sequence belongs to the G-alpha family. G proteins are composed of 3 units; alpha, beta and gamma. The alpha chain contains the guanine nucleotide binding site.

Functionally, guanine nucleotide-binding proteins (G proteins) are involved as modulators or transducers in various transmembrane signaling systems. G alpha-8 is a potential analog for the G(s)-like G-proteins which stimulate adenylate cyclase in mammals. The sequence is that of Guanine nucleotide-binding protein alpha-8 subunit (gpaH) from Dictyostelium discoideum (Social amoeba).